A 259-amino-acid chain; its full sequence is Deoxyribose-phosphate aldolase (259 aa).

Residue Asp102 is the Proton donor/acceptor of the active site. Lys167 serves as the catalytic Schiff-base intermediate with acetaldehyde. Lys201 acts as the Proton donor/acceptor in catalysis.

The protein belongs to the DeoC/FbaB aldolase family. DeoC type 2 subfamily.

It is found in the cytoplasm. It carries out the reaction 2-deoxy-D-ribose 5-phosphate = D-glyceraldehyde 3-phosphate + acetaldehyde. It participates in carbohydrate degradation; 2-deoxy-D-ribose 1-phosphate degradation; D-glyceraldehyde 3-phosphate and acetaldehyde from 2-deoxy-alpha-D-ribose 1-phosphate: step 2/2. Catalyzes a reversible aldol reaction between acetaldehyde and D-glyceraldehyde 3-phosphate to generate 2-deoxy-D-ribose 5-phosphate. The protein is Deoxyribose-phosphate aldolase of Proteus mirabilis (strain HI4320).